Reading from the N-terminus, the 363-residue chain is Cytochrome b (363 aa).

4 consecutive transmembrane segments (helical) span residues 23–43 (FGFI…MLSF), 67–89 (WFVR…LHIM), 102–122 (SWYS…VGYV), and 164–184 (FFSI…FHLY). Residues His-73 and His-87 each coordinate heme b. Residues His-168 and His-182 each coordinate heme b. His-187 lines the a ubiquinone pocket. 4 helical membrane-spanning segments follow: residues 210-230 (VLFS…VQSG), 271-291 (VFPT…LLVL), 310-330 (VWTT…SIGK), and 332-352 (VVHV…VLFI).

It belongs to the cytochrome b family. The main subunits of complex b-c1 are: cytochrome b, cytochrome c1 and the Rieske protein. It depends on heme b as a cofactor.

The protein resides in the mitochondrion inner membrane. Its function is as follows. Component of the ubiquinol-cytochrome c reductase complex (complex III or cytochrome b-c1 complex) that is part of the mitochondrial respiratory chain. The b-c1 complex mediates electron transfer from ubiquinol to cytochrome c. Contributes to the generation of a proton gradient across the mitochondrial membrane that is then used for ATP synthesis. The sequence is that of Cytochrome b (MT-CYB) from Theileria annulata.